The primary structure comprises 752 residues: Pentatricopeptide repeat-containing protein At5g13270, chloroplastic (752 aa).

A chloroplast-targeting transit peptide spans 1-80 (MTILTVQSSF…LQEMDKAGVS (80 aa)). 15 PPR repeats span residues 47–81 (QGQVENLHLVSLSKHRKLNEAFEFLQEMDKAGVSV), 82–116 (SSYSYQCLFEACRELRSLSHGRLLHDRMRMGIENP), 117–147 (SVLLQNCVLQMYCECRSLEDADKLFDEMSEL), 148–182 (NAVSRTTMISAYAEQGILDKAVGLFSGMLASGDKP), 183–217 (PSSMYTTLLKSLVNPRALDFGRQIHAHVIRAGLCS), 218–248 (NTSIETGIVNMYVKCGWLVGAKRVFDQMAVK), 249–283 (KPVACTGLMVGYTQAGRARDALKLFVDLVTEGVEW), 284–318 (DSFVFSVVLKACASLEELNLGKQIHACVAKLGLES), 319–349 (EVSVGTPLVDFYIKCSSFESACRAFQEIREP), 350–384 (NDVSWSAIISGYCQMSQFEEAVKTFKSLRSKNASI), 386–420 (NSFTYTSIFQACSVLADCNIGGQVHADAIKRSLIG), 421–451 (SQYGESALITMYSKCGCLDDANEVFESMDNP), 452–486 (DIVAWTAFISGHAYYGNASEALRLFEKMVSCGMKP), 487–522 (NSVTFIAVLTACSHAGLVEQGKHCLDTMLRKYNVAP), and 523–553 (TIDHYDCMIDIYARSGLLDEALKFMKNMPFE). The segment at 558–633 (SWKCFLSGCW…ELSCSWIQEK (76 aa)) is type E motif. A type E(+) motif region spans residues 634–664 (GKIHRFIVGDKHHPQTQEIYEKLKEFDGFME). Residues 665–752 (GDMFQCNMTE…EGKCSCNDYW (88 aa)) form a type DYW motif region.

It belongs to the PPR family. PCMP-H subfamily.

The protein localises to the plastid. It localises to the chloroplast. The protein is Pentatricopeptide repeat-containing protein At5g13270, chloroplastic (PCMP-H90) of Arabidopsis thaliana (Mouse-ear cress).